Here is a 149-residue protein sequence, read N- to C-terminus: Oligosaccharyltransferase complex subunit OSTC (149 aa).

Residues Met-1 to Thr-32 are Cytoplasmic-facing. Residues Val-33 to Ile-53 form a helical membrane-spanning segment. The Extracellular segment spans residues Val-54 to Tyr-83. A helical transmembrane segment spans residues Ile-84–Leu-104. Over Asp-105–Arg-117 the chain is Cytoplasmic. Residues Phe-118–Phe-138 form a helical membrane-spanning segment. The Extracellular segment spans residues Met-139–Gly-149.

This sequence belongs to the OSTC family. As to quaternary structure, component of STT3A-containing oligosaccharyl transferase (OST-A) complex. STT3A-containing complex assembly occurs through the formation of 3 subcomplexes. Subcomplex 1 contains RPN1 and TMEM258, subcomplex 2 contains the STT3A-specific subunits STT3A, DC2/OSTC, and KCP2 as well as the core subunit OST4, and subcomplex 3 contains RPN2, DAD1, and OST48. The OST-A complex can form stable complexes with the Sec61 complex or with both the Sec61 and TRAP complexes. Interacts with PSEN1 and NCSTN; indicative for an association with the gamma-secretase complex.

The protein resides in the endoplasmic reticulum. It is found in the membrane. The protein operates within protein modification; protein glycosylation. In terms of biological role, subunit of STT3A-containing oligosaccharyl transferase (OST-A) complex that catalyzes the initial transfer of a defined glycan (Glc(3)Man(9)GlcNAc(2) in eukaryotes) from the lipid carrier dolichol-pyrophosphate to an asparagine residue within an Asn-X-Ser/Thr consensus motif in nascent polypeptide chains, the first step in protein N-glycosylation. N-glycosylation occurs cotranslationally and the complex associates with the Sec61 complex at the channel-forming translocon complex that mediates protein translocation across the endoplasmic reticulum (ER). Within the OST-A complex, acts as an adapter that anchors the OST-A complex to the Sec61 complex. May be involved in N-glycosylation of APP (amyloid-beta precursor protein). Can modulate gamma-secretase cleavage of APP by enhancing endoprotelysis of PSEN1. The sequence is that of Oligosaccharyltransferase complex subunit OSTC from Canis lupus familiaris (Dog).